The sequence spans 226 residues: Adenylate kinase (226 aa).

An ATP-binding site is contributed by 12 to 17 (GSGKGT). An NMP region spans residues 32–61 (ESGAIFREHIGGGTELGLKAKEYIERGDLV). Residues Ser-33, Arg-38, 59–61 (DLV), 87–90 (GFPR), and Gln-94 each bind AMP. The segment at 128 to 171 (GRRLCVNDNNHPNHIAFEAIKPVEKDGKLVCRVCGGDLKTRPDD) is LID. Arg-129 contributes to the ATP binding site. Arg-168 and Arg-180 together coordinate AMP. Ala-213 lines the ATP pocket.

Belongs to the adenylate kinase family. As to quaternary structure, monomer.

The protein localises to the cytoplasm. It carries out the reaction AMP + ATP = 2 ADP. The protein operates within purine metabolism; AMP biosynthesis via salvage pathway; AMP from ADP: step 1/1. Functionally, catalyzes the reversible transfer of the terminal phosphate group between ATP and AMP. Plays an important role in cellular energy homeostasis and in adenine nucleotide metabolism. This chain is Adenylate kinase, found in Desulfotalea psychrophila (strain LSv54 / DSM 12343).